Here is a 116-residue protein sequence, read N- to C-terminus: Urease subunit beta (116 aa).

The disordered stretch occupies residues 97–116 (IQGPLDAGTAETAPGLPQQP).

Belongs to the urease beta subunit family. As to quaternary structure, heterotrimer of UreA (gamma), UreB (beta) and UreC (alpha) subunits. Three heterotrimers associate to form the active enzyme.

The protein resides in the cytoplasm. The catalysed reaction is urea + 2 H2O + H(+) = hydrogencarbonate + 2 NH4(+). Its pathway is nitrogen metabolism; urea degradation; CO(2) and NH(3) from urea (urease route): step 1/1. The protein is Urease subunit beta of Paracidovorax citrulli (strain AAC00-1) (Acidovorax citrulli).